Here is a 389-residue protein sequence, read N- to C-terminus: D(-)-tartrate dehydratase (389 aa).

Substrate-binding positions include N21, N55, K102, Y156, K182, 182 to 184 (KMK), 213 to 215 (DAN), E239, E265, H322, and 341 to 343 (ESY). Residue K184 is the acceptor of the active site. Residues D213, E239, and E265 each contribute to the Mg(2+) site. The active-site Proton donor/acceptor is H322.

Belongs to the mandelate racemase/muconate lactonizing enzyme family. Homooctamer; tetramer of dimers. The cofactor is Mg(2+).

The catalysed reaction is (S,S)-tartrate = oxaloacetate + H2O. Its function is as follows. Catalyzes the dehydration of D-tartrate to oxaloacetate. In Bradyrhizobium diazoefficiens (strain JCM 10833 / BCRC 13528 / IAM 13628 / NBRC 14792 / USDA 110), this protein is D(-)-tartrate dehydratase (tarD).